The chain runs to 97 residues: Small ribosomal subunit protein bS6 (97 aa).

The protein belongs to the bacterial ribosomal protein bS6 family.

In terms of biological role, binds together with bS18 to 16S ribosomal RNA. This Lactococcus lactis subsp. cremoris (strain MG1363) protein is Small ribosomal subunit protein bS6.